Here is a 62-residue protein sequence, read N- to C-terminus: Small ribosomal subunit protein eS27 (62 aa).

4 residues coordinate Zn(2+): Cys17, Cys20, Cys36, and Cys39. The C4-type zinc-finger motif lies at 17–39 (CNDCENEQIIFGSASRKITCVVC).

The protein belongs to the eukaryotic ribosomal protein eS27 family. As to quaternary structure, part of the 30S ribosomal subunit. Requires Zn(2+) as cofactor.

In Methanosarcina barkeri (strain Fusaro / DSM 804), this protein is Small ribosomal subunit protein eS27.